Consider the following 800-residue polypeptide: Chondroitin sulfate synthase 1 (800 aa).

Residues 1 to 7 (MAARGRR) are Cytoplasmic-facing. The chain crosses the membrane as a helical; Signal-anchor for type II membrane protein span at residues 8-28 (AWLSMLLGLVLGFVLASRLVL). Residues 29–800 (PRASELKRVG…GGSHGSARTA (772 aa)) lie on the Lumenal side of the membrane. The tract at residues 36-66 (RVGPRRRPSPEGCRPGQEASQPGGARGDARG) is disordered. Asparagine 188 and asparagine 622 each carry an N-linked (GlcNAc...) asparagine glycan. A divalent metal cation is bound by residues aspartate 632 and histidine 746.

The protein belongs to the chondroitin N-acetylgalactosaminyltransferase family. Co(2+) serves as cofactor. The cofactor is Mn(2+). Cd(2+) is required as a cofactor.

It is found in the golgi apparatus. It localises to the golgi stack membrane. The protein localises to the secreted. The enzyme catalyses 3-O-(beta-D-GlcA-(1-&gt;3)-beta-D-GalNAc-(1-&gt;4)-beta-D-GlcA-(1-&gt;3)-beta-D-Gal-(1-&gt;3)-beta-D-Gal-(1-&gt;4)-beta-D-Xyl)-L-seryl-[protein] + UDP-N-acetyl-alpha-D-galactosamine = 3-O-(beta-D-GalNAc-(1-&gt;4)-beta-D-GlcA-(1-&gt;3)-beta-D-GalNAc-(1-&gt;4)-beta-D-GlcA-(1-&gt;3)-beta-D-Gal-(1-&gt;3)-beta-D-Gal-(1-&gt;4)-beta-D-Xyl)-L-seryl-[protein] + UDP + H(+). It carries out the reaction 3-O-{beta-D-GlcA-(1-&gt;3)-[beta-D-GalNAc-(1-&gt;4)-beta-D-GlcA-(1-&gt;3)](n)-beta-D-GalNAc-(1-&gt;4)-beta-D-GlcA-(1-&gt;3)-beta-D-Gal-(1-&gt;3)-beta-D-Gal-(1-&gt;4)-beta-D-Xyl}-L-seryl-[protein] + UDP-N-acetyl-alpha-D-galactosamine = 3-O-{[beta-D-GalNAc-(1-&gt;4)-beta-D-GlcA-(1-&gt;3)](n+1)-beta-D-GalNAc-(1-&gt;4)-beta-D-GlcA-(1-&gt;3)-beta-D-Gal-(1-&gt;3)-beta-D-Gal-(1-&gt;4)-beta-D-Xyl}-L-seryl-[protein] + UDP + H(+). The catalysed reaction is 3-O-(beta-D-GalNAc-(1-&gt;4)-beta-D-GlcA-(1-&gt;3)-beta-D-Gal-(1-&gt;3)-beta-D-Gal-(1-&gt;4)-beta-D-Xyl)-L-seryl-[protein] + UDP-alpha-D-glucuronate = 3-O-(beta-D-GlcA-(1-&gt;3)-beta-D-GalNAc-(1-&gt;4)-beta-D-GlcA-(1-&gt;3)-beta-D-Gal-(1-&gt;3)-beta-D-Gal-(1-&gt;4)-beta-D-Xyl)-L-seryl-[protein] + UDP + H(+). It catalyses the reaction 3-O-{[beta-D-GalNAc-(1-&gt;4)-beta-D-GlcA-(1-&gt;3)](n)-beta-D-GalNAc-(1-&gt;4)-beta-D-GlcA-(1-&gt;3)-beta-D-Gal-(1-&gt;3)-beta-D-Gal-(1-&gt;4)-beta-D-Xyl}-L-seryl-[protein] + UDP-alpha-D-glucuronate = 3-O-{beta-D-GlcA-(1-&gt;3)-[beta-D-GalNAc-(1-&gt;4)-beta-D-GlcA-(1-&gt;3)](n)-beta-D-GalNAc-(1-&gt;4)-beta-D-GlcA-(1-&gt;3)-beta-D-Gal-(1-&gt;3)-beta-D-Gal-(1-&gt;4)-beta-D-Xyl}-L-seryl-[protein] + UDP + H(+). Has both beta-1,3-glucuronic acid and beta-1,4-N-acetylgalactosamine transferase activity. Transfers glucuronic acid (GlcUA) from UDP-GlcUA and N-acetylgalactosamine (GalNAc) from UDP-GalNAc to the non-reducing end of the elongating chondroitin polymer. Involved in the negative control of osteogenesis likely through the modulation of NOTCH signaling. The polypeptide is Chondroitin sulfate synthase 1 (Chsy1) (Mus musculus (Mouse)).